The primary structure comprises 425 residues: Serine--tRNA ligase (425 aa).

230–232 provides a ligand contact to L-serine; that stretch reads TAE. 261–263 is a binding site for ATP; it reads RSE. Glu284 provides a ligand contact to L-serine. 348–351 contributes to the ATP binding site; the sequence is EISS. Position 384 (Ser384) interacts with L-serine.

Belongs to the class-II aminoacyl-tRNA synthetase family. Type-1 seryl-tRNA synthetase subfamily. As to quaternary structure, homodimer. The tRNA molecule binds across the dimer.

It is found in the cytoplasm. The enzyme catalyses tRNA(Ser) + L-serine + ATP = L-seryl-tRNA(Ser) + AMP + diphosphate + H(+). It catalyses the reaction tRNA(Sec) + L-serine + ATP = L-seryl-tRNA(Sec) + AMP + diphosphate + H(+). Its pathway is aminoacyl-tRNA biosynthesis; selenocysteinyl-tRNA(Sec) biosynthesis; L-seryl-tRNA(Sec) from L-serine and tRNA(Sec): step 1/1. Catalyzes the attachment of serine to tRNA(Ser). Is also able to aminoacylate tRNA(Sec) with serine, to form the misacylated tRNA L-seryl-tRNA(Sec), which will be further converted into selenocysteinyl-tRNA(Sec). The sequence is that of Serine--tRNA ligase from Streptococcus pyogenes serotype M6 (strain ATCC BAA-946 / MGAS10394).